A 464-amino-acid polypeptide reads, in one-letter code: Soluble pyridine nucleotide transhydrogenase (464 aa).

35-44 (EDKSQVGGNC) provides a ligand contact to FAD.

Belongs to the class-I pyridine nucleotide-disulfide oxidoreductase family. FAD is required as a cofactor.

The protein resides in the cytoplasm. The catalysed reaction is NAD(+) + NADPH = NADH + NADP(+). Functionally, conversion of NADPH, generated by peripheral catabolic pathways, to NADH, which can enter the respiratory chain for energy generation. The protein is Soluble pyridine nucleotide transhydrogenase of Hahella chejuensis (strain KCTC 2396).